We begin with the raw amino-acid sequence, 331 residues long: Probable cytosolic iron-sulfur protein assembly protein Ciao1 (331 aa).

WD repeat units follow at residues 12 to 51, 57 to 96, 97 to 136, 142 to 181, 188 to 227, 246 to 285, and 297 to 331; these read GHKGRIWGVAWHPKGNSFASCGEDKAIRIWSLSGNTWTTK, GHKRTIREVRWSPCGEYLASASFDATTAIWSKHECTATLE, GHENEVKSVSWSRSGGLLATCSRDKSVWIWEVAGDDEFEC, AHSQDVKRVVWHPTKEVLASASYDNTIKMFAESALDSDWD, SHTSTVWSIDFDADGERLVSCSDDATLKIWRAYHPGNDAG, EHSRAIYDVSWCKQTGLIASACGDDGIRIFKECSDSKRDA, and AHEQDVNAVEWNPVTAGQLISCSDDGTIKIWKLQE.

Belongs to the WD repeat CIA1 family.

Essential component of the cytosolic iron-sulfur (Fe/S) protein assembly machinery. Required for the maturation of extramitochondrial Fe/S proteins. This is Probable cytosolic iron-sulfur protein assembly protein Ciao1 from Drosophila virilis (Fruit fly).